Consider the following 21-residue polypeptide: Brevinin-1OKb (21 aa).

Lysine amide is present on K21.

In terms of tissue distribution, expressed by the skin glands.

Its subcellular location is the secreted. Functionally, antimicrobial peptide. The sequence is that of Brevinin-1OKb from Nidirana okinavana (Kampira Falls frog).